The following is a 443-amino-acid chain: Glutamyl-tRNA reductase (443 aa).

Substrate contacts are provided by residues T49–R52, S109, E114–Q116, and Q120. The active-site Nucleophile is the C50. G189–C194 contributes to the NADP(+) binding site. Residues P421–S443 are disordered. A compositionally biased stretch (basic and acidic residues) spans S430–S443.

The protein belongs to the glutamyl-tRNA reductase family. In terms of assembly, homodimer.

The catalysed reaction is (S)-4-amino-5-oxopentanoate + tRNA(Glu) + NADP(+) = L-glutamyl-tRNA(Glu) + NADPH + H(+). The protein operates within porphyrin-containing compound metabolism; protoporphyrin-IX biosynthesis; 5-aminolevulinate from L-glutamyl-tRNA(Glu): step 1/2. Its function is as follows. Catalyzes the NADPH-dependent reduction of glutamyl-tRNA(Glu) to glutamate 1-semialdehyde (GSA). This Syntrophotalea carbinolica (strain DSM 2380 / NBRC 103641 / GraBd1) (Pelobacter carbinolicus) protein is Glutamyl-tRNA reductase.